Here is a 435-residue protein sequence, read N- to C-terminus: Transcription activator ACTTR (435 aa).

Positions 16-43 (CDFCTQSKLRCNKNKPSCRRCTIQQQPC) form a DNA-binding region, zn(2)-C6 fungal-type. The disordered stretch occupies residues 48-89 (ARRTGRPPKRPRKANDGQEANEQHGDQDPVTSTPGGSCQQQS). The segment covering 50 to 59 (RTGRPPKRPR) has biased composition (basic residues). The segment covering 60-74 (KANDGQEANEQHGDQ) has biased composition (basic and acidic residues). Polar residues predominate over residues 76 to 89 (PVTSTPGGSCQQQS).

The protein localises to the nucleus. Transcription factor that regulates the expression of the gene clusters that mediate the biosynthesis of the host-selective toxins (HSTs) ACT-toxins responsible for brown spot of tangerine disease by the tangerine pathotype which affects tangerines and mandarins. ACT-toxins consist of three moieties, 9,10-epoxy-8-hydroxy-9-methyl-decatrienoic acid (EDA), valine and a polyketide. ACT-toxin I is toxic to both citrus and pear; toxin II the 5''-deoxy derivative of ACT-toxin I, is highly toxic to pear and slightly toxic to citrus. On cellular level, ACT-toxins affect plasma membrane of susceptible cells and cause a sudden increase in loss of K(+) after a few minutes of toxin treatment. The sequence is that of Transcription activator ACTTR from Alternaria alternata (Alternaria rot fungus).